Consider the following 496-residue polypeptide: MKKYILSLDQGTTSSRAILFNKKGEIVHSAQKEFTQHFPKPGWVEHNAQEIWGSILAVIATCLSEADVKPEQIAGIGITNQRETAVVWDKTTGKPIYNAIVWQSRQTAEICDELKEKGYSEMVREKTGLLIDAYFSGTKVKWILDNVEGAREKAENGDLLFGTIDTWLVWKLSGGKAHVTDYSNASRTLMFNIHDLQWDDELLDMLTVPKSMLPEVRPSSEVYGETIDYHFFGQNVPIAGVAGDQQAALFGQACFGEGMAKNTYGTGCFMLMNTGEKAVASEHGLLTTIAWGIDGKVNYALEGSIFVAGSAIQWLRDGMRMFKDASESEVYASRVESTDGVYVVPAFVGLGTPYWDSEVRGAMFGVTRGTTKEHFIRATLESLAYQTKDVLCAMEADSGIELKTLRVDGGAVKNNFLMKFQSDILDVPVERPVINETTALGAAYLAGLAVGYWKNQDEIKEQWHMDKRFEPTMEAEISEELYAGWKKAIEATKAFK.

Residue threonine 12 coordinates ADP. ATP is bound by residues threonine 12, threonine 13, and serine 14. Position 12 (threonine 12) interacts with sn-glycerol 3-phosphate. Arginine 16 contacts ADP. Sn-glycerol 3-phosphate is bound by residues arginine 82, glutamate 83, and tyrosine 134. The glycerol site is built by arginine 82, glutamate 83, and tyrosine 134. Position 230 is a phosphohistidine; by HPr (histidine 230). Residue aspartate 244 coordinates sn-glycerol 3-phosphate. Glycerol contacts are provided by aspartate 244 and glutamine 245. ADP is bound by residues threonine 266 and glycine 309. 4 residues coordinate ATP: threonine 266, glycine 309, glutamine 313, and glycine 410. Positions 410 and 414 each coordinate ADP.

The protein belongs to the FGGY kinase family. Homotetramer and homodimer (in equilibrium). The phosphoenolpyruvate-dependent sugar phosphotransferase system (PTS), including enzyme I, and histidine-containing protein (HPr) are required for the phosphorylation, which leads to the activation of the enzyme.

The catalysed reaction is glycerol + ATP = sn-glycerol 3-phosphate + ADP + H(+). Its pathway is polyol metabolism; glycerol degradation via glycerol kinase pathway; sn-glycerol 3-phosphate from glycerol: step 1/1. With respect to regulation, activated by phosphorylation and inhibited by fructose 1,6-bisphosphate (FBP). Key enzyme in the regulation of glycerol uptake and metabolism. Catalyzes the phosphorylation of glycerol to yield sn-glycerol 3-phosphate. This chain is Glycerol kinase, found in Bacillus cereus (strain Q1).